The primary structure comprises 269 residues: Probable aquaporin TIP5-1 (269 aa).

Helical transmembrane passes span 19-39 (AYFAEFFSTFLFVFIAVGSTI), 54-74 (SLMATAVAQAFGLFAAVFIAA), 84-104 (AVTFAYAIGGHITVPSAIFYW), 139-159 (FGAGILEGVLTFMVVYTVHVA), and 177-197 (ALGALVVGAVTGACVLAAGSL). The NPA 1 motif lies at 82 to 84 (NPA). Positions 203 to 205 (NPA) match the NPA 2 motif. The chain crosses the membrane as a helical span at residues 223 to 243 (YWAGPMVGAAVAALVHQALVF).

It belongs to the MIP/aquaporin (TC 1.A.8) family. TIP (TC 1.A.8.10) subfamily. Expressed in leaves and anthers, and at lower levels in roots.

Its subcellular location is the vacuole membrane. Its function is as follows. Aquaporins facilitate the transport of water and small neutral solutes across cell membranes. May be involved in transport from the vacuolar compartment to the cytoplasm. The protein is Probable aquaporin TIP5-1 (TIP5;1) of Oryza sativa subsp. japonica (Rice).